Consider the following 144-residue polypeptide: Ribosomal RNA large subunit methyltransferase H (144 aa).

Residues Leu63, Gly92, and 111–116 (LSAMTL) each bind S-adenosyl-L-methionine.

The protein belongs to the RNA methyltransferase RlmH family. Homodimer.

The protein resides in the cytoplasm. It catalyses the reaction pseudouridine(1915) in 23S rRNA + S-adenosyl-L-methionine = N(3)-methylpseudouridine(1915) in 23S rRNA + S-adenosyl-L-homocysteine + H(+). In terms of biological role, specifically methylates the pseudouridine at position 1915 (m3Psi1915) in 23S rRNA. The polypeptide is Ribosomal RNA large subunit methyltransferase H (Prochlorococcus marinus (strain MIT 9313)).